The chain runs to 466 residues: Glycylpeptide N-tetradecanoyltransferase (466 aa).

A disordered region spans residues Met-1–Gly-21. Residues Asn-8–Ser-19 are compositionally biased toward polar residues. A Phosphoserine modification is found at Ser-17. Residues Phe-51–Trp-54, Leu-185–Ile-187, and Ser-193–Thr-197 each bind tetradecanoyl-CoA. The Proton acceptor; via carboxylate role is filled by Ile-466.

The protein belongs to the NMT family. In terms of assembly, monomer.

Its subcellular location is the cytoplasm. The enzyme catalyses N-terminal glycyl-[protein] + tetradecanoyl-CoA = N-tetradecanoylglycyl-[protein] + CoA + H(+). Functionally, adds a myristoyl group to the N-terminal glycine residue of certain cellular proteins. The chain is Glycylpeptide N-tetradecanoyltransferase (nmt1) from Schizosaccharomyces pombe (strain 972 / ATCC 24843) (Fission yeast).